A 325-amino-acid polypeptide reads, in one-letter code: MVAELEFEKPLVELRRKIQELKEFMKTADVDLSAEIEKLEARLAKLENEIYANLTPWDRVQIARHPQRPTTLDYIERLFTNFLECHGDRCFGDDEAIVGGIAKYDGLPVTVIGHQRGKDTKENLRRNFGMPHPEGYRKALRLMKQAEKFSRPIICFIDTKGAYPGKAAEERGQSEAIARNLFEMAGLTVPVVCIVIGEGGSGGALALGVGNHIHMLENSTYSVISPEGAAAILWKDASLAQRAAETMKITAHDLKALGVIDEIIPEVKGGAHRNADEQAKEIDRVLRRSLKQLLALDGEELVRQRYEKFKQMGQVSFLPETIRAR.

The CoA carboxyltransferase C-terminal domain maps to 35 to 292; sequence EIEKLEARLA…DRVLRRSLKQ (258 aa).

This sequence belongs to the AccA family. In terms of assembly, acetyl-CoA carboxylase is a heterohexamer composed of biotin carboxyl carrier protein (AccB), biotin carboxylase (AccC) and two subunits each of ACCase subunit alpha (AccA) and ACCase subunit beta (AccD).

The protein resides in the cytoplasm. The catalysed reaction is N(6)-carboxybiotinyl-L-lysyl-[protein] + acetyl-CoA = N(6)-biotinyl-L-lysyl-[protein] + malonyl-CoA. It participates in lipid metabolism; malonyl-CoA biosynthesis; malonyl-CoA from acetyl-CoA: step 1/1. Its function is as follows. Component of the acetyl coenzyme A carboxylase (ACC) complex. First, biotin carboxylase catalyzes the carboxylation of biotin on its carrier protein (BCCP) and then the CO(2) group is transferred by the carboxyltransferase to acetyl-CoA to form malonyl-CoA. The chain is Acetyl-coenzyme A carboxylase carboxyl transferase subunit alpha from Geobacillus kaustophilus (strain HTA426).